The sequence spans 317 residues: Toluene-4-sulfonate monooxygenase system reductase subunit TsaB1 (317 aa).

The 107-residue stretch at Ser-2–Glu-108 folds into the FAD-binding FR-type domain. Arg-110–Lys-220 provides a ligand contact to NAD(+). Residues Gln-230–Ile-317 enclose the 2Fe-2S ferredoxin-type domain. Positions 266, 271, 274, and 304 each coordinate [2Fe-2S] cluster.

Monomer. Part of the p-toluenesulfonate methyl-monooxygenase complex TsaBM, comprising the reductase TsaB and the oxygenase TsaM. Requires FMN as cofactor.

Its function is as follows. Iron-sulfur flavoprotein carrying electrons from NADH to the oxygenase TsaM. Involved in the toluene-4-sulfonate degradation pathway. This chain is Toluene-4-sulfonate monooxygenase system reductase subunit TsaB1 (tsaB1), found in Comamonas testosteroni (Pseudomonas testosteroni).